A 792-amino-acid polypeptide reads, in one-letter code: Kinesin-like protein KIFC2 (792 aa).

2 disordered regions span residues 22 to 45 and 142 to 184; these read AAAV…RRRP and QGTQ…QEHQ. Residues 142-169 are compositionally biased toward polar residues; that stretch reads QGTQPTCPVQPSTLDGSLSQEESSSQPT. Residues 186–347 adopt a coiled-coil conformation; that stretch reads LQLEEEQRVW…ARMASLRQGC (162 aa). Residues 409–732 enclose the Kinesin motor domain; the sequence is NIRVLCRLRP…LKFAERVGQV (324 aa). 486–493 lines the ATP pocket; sequence GQTGTGKT. A disordered region spans residues 734 to 792; sequence LGPARRRRAPRSGTPSSLSTDTPLTGTSCTPTPSPGSPPSTSPNSCSGLTLEPPGDPPP. Residues 744 to 764 are compositionally biased toward low complexity; it reads RSGTPSSLSTDTPLTGTSCTP. Positions 765-774 are enriched in pro residues; sequence TPSPGSPPST.

This sequence belongs to the TRAFAC class myosin-kinesin ATPase superfamily. Kinesin family. Present in axons and dendrites of neurons in the central and peripheral nervous systems.

Its subcellular location is the cytoplasm. It localises to the cytoskeleton. Functionally, may play a role in microtubule-dependent retrograde axonal transport. May function as the motor for the transport of multivesicular body (MVB)-like organelles in dendrites. This chain is Kinesin-like protein KIFC2 (Kifc2), found in Mus musculus (Mouse).